Reading from the N-terminus, the 301-residue chain is Ribonuclease Z (301 aa).

7 residues coordinate Zn(2+): His61, His63, Asp65, His66, His140, Asp211, and His269. The active-site Proton acceptor is Asp65.

It belongs to the RNase Z family. As to quaternary structure, homodimer. Zn(2+) serves as cofactor.

It catalyses the reaction Endonucleolytic cleavage of RNA, removing extra 3' nucleotides from tRNA precursor, generating 3' termini of tRNAs. A 3'-hydroxy group is left at the tRNA terminus and a 5'-phosphoryl group is left at the trailer molecule.. In terms of biological role, zinc phosphodiesterase, which displays some tRNA 3'-processing endonuclease activity. Probably involved in tRNA maturation, by removing a 3'-trailer from precursor tRNA. This chain is Ribonuclease Z, found in Bradyrhizobium diazoefficiens (strain JCM 10833 / BCRC 13528 / IAM 13628 / NBRC 14792 / USDA 110).